The following is a 443-amino-acid chain: ATP-dependent protease ATPase subunit HslU (443 aa).

ATP-binding positions include isoleucine 18, 60–65 (GVGKTE), aspartate 256, glutamate 321, and arginine 393.

It belongs to the ClpX chaperone family. HslU subfamily. A double ring-shaped homohexamer of HslV is capped on each side by a ring-shaped HslU homohexamer. The assembly of the HslU/HslV complex is dependent on binding of ATP.

It localises to the cytoplasm. In terms of biological role, ATPase subunit of a proteasome-like degradation complex; this subunit has chaperone activity. The binding of ATP and its subsequent hydrolysis by HslU are essential for unfolding of protein substrates subsequently hydrolyzed by HslV. HslU recognizes the N-terminal part of its protein substrates and unfolds these before they are guided to HslV for hydrolysis. This is ATP-dependent protease ATPase subunit HslU from Enterobacter sp. (strain 638).